A 103-amino-acid chain; its full sequence is Large ribosomal subunit protein bL21 (103 aa).

This sequence belongs to the bacterial ribosomal protein bL21 family. In terms of assembly, part of the 50S ribosomal subunit. Contacts protein L20.

This protein binds to 23S rRNA in the presence of protein L20. The chain is Large ribosomal subunit protein bL21 from Polaromonas naphthalenivorans (strain CJ2).